Reading from the N-terminus, the 708-residue chain is MKDMPLRIHVLLGLAITTLVQAVDKKVDCPRLCTCEIRPWFTPRSIYMEASTVDCNDLGLLTFPARLPANTQILLLQTNNIAKIEYSTDFPVNLTGLDLSQNNLSSVTNINVKKMPQLLSVYLEENKLTELPEKCLSELSNLQELYINHNLLSTISPGAFIGLHNLLRLHLNSNRLQMINSKWFDALPNLEILMIGENPIIRIKDMNFKPLINLRSLVIAGINLTEIPDNALVGLENLESISFYDNRLIKVPHVALQKVVNLKFLDLNKNPINRIRRGDFSNMLHLKELGINNMPELISIDSLAVDNLPDLRKIEATNNPRLSYIHPNAFFRLPKLESLMLNSNALSALYHGTIESLPNLKEISIHSNPIRCDCVIRWMNMNKTNIRFMEPDSLFCVDPPEFQGQNVRQVHFRDMMEICLPLIAPESFPSNLNVEAGSYVSFHCRATAEPQPEIYWITPSGQKLLPNTLTDKFYVHSEGTLDINGVTPKEGGLYTCIATNLVGADLKSVMIKVDGSFPQDNNGSLNIKIRDIQANSVLVSWKASSKILKSSVKWTAFVKTENSHAAQSARIPSDVKVYNLTHLNPSTEYKICIDIPTIYQKNRKKCVNVTTKGLHPDQKEYEKNNTTTLMACLGGLLGIIGVICLISCLSPEMNCDGGHSYVRNYLQKPTFALGELYPPLINLWEAGKEKSTSLKVKATVIGLPTNMS.

Positions 1 to 22 (MKDMPLRIHVLLGLAITTLVQA) are cleaved as a signal peptide. The LRRNT domain occupies 23-69 (VDKKVDCPRLCTCEIRPWFTPRSIYMEASTVDCNDLGLLTFPARLPA). Topologically, residues 23-628 (VDKKVDCPRL…KEYEKNNTTT (606 aa)) are extracellular. 12 LRR repeats span residues 70-91 (NTQI…TDFP), 93-114 (NLTG…NVKK), 117-138 (QLLS…CLSE), 141-162 (NLQE…AFIG), 165-186 (NLLR…WFDA), 189-210 (NLEI…NFKP), 213-234 (NLRS…ALVG), 237-258 (NLES…ALQK), 261-282 (NLKF…DFSN), 285-304 (HLKE…DSLA), 310-332 (DLRK…AFFR), and 335-358 (KLES…ESLP). 2 N-linked (GlcNAc...) asparagine glycosylation sites follow: Asn93 and Asn103. A glycan (N-linked (GlcNAc...) asparagine) is linked at Asn223. Residues 368–421 (NPIRCDCVIRWMNMNKTNIRFMEPDSLFCVDPPEFQGQNVRQVHFRDMMEICLP) enclose the LRRCT domain. The N-linked (GlcNAc...) asparagine glycan is linked to Asn382. The 94-residue stretch at 421 to 514 (PLIAPESFPS…DLKSVMIKVD (94 aa)) folds into the Ig-like C2-type domain. Cys444 and Cys496 form a disulfide bridge. 5 N-linked (GlcNAc...) asparagine glycosylation sites follow: Asn522, Asn579, Asn608, Asn624, and Asn625. Positions 523–617 (GSLNIKIRDI…NVTTKGLHPD (95 aa)) constitute a Fibronectin type-III domain. The helical transmembrane segment at 629–649 (LMACLGGLLGIIGVICLISCL) threads the bilayer. Residues 650 to 708 (SPEMNCDGGHSYVRNYLQKPTFALGELYPPLINLWEAGKEKSTSLKVKATVIGLPTNMS) are Cytoplasmic-facing.

The protein localises to the membrane. The protein is Leucine-rich repeat neuronal protein 3 (LRRN3) of Homo sapiens (Human).